We begin with the raw amino-acid sequence, 315 residues long: DNA-directed RNA polymerase subunit alpha (315 aa).

The alpha N-terminal domain (alpha-NTD) stretch occupies residues 1–228 (MLEIEKPKIE…EHFKLFMTLT (228 aa)). Residues 245-315 (KEKVLEMTIE…LGLGLRKSED (71 aa)) are alpha C-terminal domain (alpha-CTD).

Belongs to the RNA polymerase alpha chain family. In terms of assembly, homodimer. The RNAP catalytic core consists of 2 alpha, 1 beta, 1 beta' and 1 omega subunit. When a sigma factor is associated with the core the holoenzyme is formed, which can initiate transcription.

The catalysed reaction is RNA(n) + a ribonucleoside 5'-triphosphate = RNA(n+1) + diphosphate. Its function is as follows. DNA-dependent RNA polymerase catalyzes the transcription of DNA into RNA using the four ribonucleoside triphosphates as substrates. The sequence is that of DNA-directed RNA polymerase subunit alpha from Clostridium botulinum (strain Langeland / NCTC 10281 / Type F).